The sequence spans 166 residues: Small ribosomal subunit protein uS5 (166 aa).

In terms of domain architecture, S5 DRBM spans 11-74 (LQEKLIAVNR…EKARRNMINV (64 aa)).

The protein belongs to the universal ribosomal protein uS5 family. As to quaternary structure, part of the 30S ribosomal subunit. Contacts proteins S4 and S8.

Its function is as follows. With S4 and S12 plays an important role in translational accuracy. Functionally, located at the back of the 30S subunit body where it stabilizes the conformation of the head with respect to the body. The chain is Small ribosomal subunit protein uS5 from Pasteurella multocida (strain Pm70).